Here is a 364-residue protein sequence, read N- to C-terminus: Matrix protein (364 aa).

The FPIV motif signature appears at 23 to 26 (FPIV).

The protein belongs to the morbillivirus/respirovirus/rubulavirus M protein family.

The protein resides in the virion. In terms of biological role, the M protein has a crucial role in virus assembly and interacts with the RNP complex as well as with the viral membrane. The sequence is that of Matrix protein (M) from Newcastle disease virus (strain Beaudette C/45) (NDV).